We begin with the raw amino-acid sequence, 529 residues long: 2-(3-amino-3-carboxypropyl)histidine synthase subunit 2-2 (529 aa).

Residues Cys-130, Cys-151, and Cys-366 each coordinate [4Fe-4S] cluster.

It belongs to the DPH1/DPH2 family. DPH2 subfamily. As to quaternary structure, component of the 2-(3-amino-3-carboxypropyl)histidine synthase complex composed of DPH1, DPH2, DPH3 and a NADH-dependent reductase, predominantly CBR1. [4Fe-4S] cluster is required as a cofactor.

The protein localises to the cytoplasm. Its pathway is protein modification; peptidyl-diphthamide biosynthesis. Functionally, required for the first step of diphthamide biosynthesis, a post-translational modification of histidine which occurs in elongation factor 2. DPH1 and DPH2 transfer a 3-amino-3-carboxypropyl (ACP) group from S-adenosyl-L-methionine (SAM) to a histidine residue, the reaction is assisted by a reduction system comprising DPH3 and a NADH-dependent reductase, predominantly CBR1. Facilitates the reduction of the catalytic iron-sulfur cluster found in the DPH1 subunit. The polypeptide is 2-(3-amino-3-carboxypropyl)histidine synthase subunit 2-2 (Candida albicans (strain SC5314 / ATCC MYA-2876) (Yeast)).